Here is a 191-residue protein sequence, read N- to C-terminus: Stress response regulator protein 1 (191 aa).

A Response regulatory domain is found at Ser-62–Gln-181. The residue at position 114 (Asp-114) is a 4-aspartylphosphate.

In terms of biological role, required for stress adaptation, morphogenesis and virulence. This chain is Stress response regulator protein 1 (SRR1), found in Clavispora lusitaniae (strain ATCC 42720) (Yeast).